Reading from the N-terminus, the 274-residue chain is Large ribosomal subunit protein uL2 (274 aa).

The disordered stretch occupies residues 224 to 274 (AMNPVDHPHGGGEGRTGEGQVPVSPWNTMTKGYRTRSNKRTQTFIVSRRKK). Basic and acidic residues predominate over residues 229–239 (DHPHGGGEGRT).

This sequence belongs to the universal ribosomal protein uL2 family. In terms of assembly, part of the 50S ribosomal subunit. Forms a bridge to the 30S subunit in the 70S ribosome.

One of the primary rRNA binding proteins. Required for association of the 30S and 50S subunits to form the 70S ribosome, for tRNA binding and peptide bond formation. It has been suggested to have peptidyltransferase activity; this is somewhat controversial. Makes several contacts with the 16S rRNA in the 70S ribosome. The protein is Large ribosomal subunit protein uL2 of Methylibium petroleiphilum (strain ATCC BAA-1232 / LMG 22953 / PM1).